The chain runs to 104 residues: Large ribosomal subunit protein uL24 (104 aa).

Belongs to the universal ribosomal protein uL24 family. In terms of assembly, part of the 50S ribosomal subunit.

One of two assembly initiator proteins, it binds directly to the 5'-end of the 23S rRNA, where it nucleates assembly of the 50S subunit. Its function is as follows. One of the proteins that surrounds the polypeptide exit tunnel on the outside of the subunit. This is Large ribosomal subunit protein uL24 from Pectobacterium carotovorum subsp. carotovorum (strain PC1).